Consider the following 379-residue polypeptide: Putative zinc metalloprotease sll0528 (379 aa).

A run of 2 helical transmembrane segments spans residues 20–40 and 54–74; these read LFGIPFYVNPSWFLILGLVTL and GGTPWILGLITALLLFASVVA. H75 serves as a coordination point for Zn(2+). The active site involves E76. H79 contacts Zn(2+). 3 consecutive transmembrane segments (helical) span residues 115–135, 148–168, and 212–232; these read FAVAIAGPAVSLVLFLGLTIV, IIGLLGMINLALALFNLIPGL, and GILNILPIGSFWTILIGWFLL. 2 consecutive CBS domains span residues 257–315 and 322–379; these read VIPN…DWPQ and MQYP…TSAA.

Belongs to the peptidase M50B family. Zn(2+) is required as a cofactor.

It localises to the cell membrane. This Synechocystis sp. (strain ATCC 27184 / PCC 6803 / Kazusa) protein is Putative zinc metalloprotease sll0528.